Consider the following 659-residue polypeptide: 3-hydroxypropionyl-coenzyme A synthetase (659 aa).

The active site involves Asp525. An N6-acetyllysine modification is found at Lys616.

It belongs to the ATP-dependent AMP-binding enzyme family.

The enzyme catalyses 3-hydroxypropanoate + ATP + CoA = 3-hydroxypropanoyl-CoA + AMP + diphosphate. Plays a role in the autotrophic CO(2) fixation pathway. Activates 3-hydroxypropionate to its CoA ester. Can also activate propionate, and to a lesser extent acrylate, acetate and butyrate. This chain is 3-hydroxypropionyl-coenzyme A synthetase, found in Sulfurisphaera tokodaii (strain DSM 16993 / JCM 10545 / NBRC 100140 / 7) (Sulfolobus tokodaii).